The primary structure comprises 226 residues: 2-C-methyl-D-erythritol 4-phosphate cytidylyltransferase (226 aa).

The protein belongs to the IspD/TarI cytidylyltransferase family. IspD subfamily.

The enzyme catalyses 2-C-methyl-D-erythritol 4-phosphate + CTP + H(+) = 4-CDP-2-C-methyl-D-erythritol + diphosphate. The protein operates within isoprenoid biosynthesis; isopentenyl diphosphate biosynthesis via DXP pathway; isopentenyl diphosphate from 1-deoxy-D-xylulose 5-phosphate: step 2/6. Functionally, catalyzes the formation of 4-diphosphocytidyl-2-C-methyl-D-erythritol from CTP and 2-C-methyl-D-erythritol 4-phosphate (MEP). The polypeptide is 2-C-methyl-D-erythritol 4-phosphate cytidylyltransferase (Bacillus cereus (strain ATCC 14579 / DSM 31 / CCUG 7414 / JCM 2152 / NBRC 15305 / NCIMB 9373 / NCTC 2599 / NRRL B-3711)).